The primary structure comprises 143 residues: Transcriptional regulator MraZ (143 aa).

2 consecutive SpoVT-AbrB domains span residues Thr5–Glu47 and Thr76–Ala119.

Belongs to the MraZ family. As to quaternary structure, forms oligomers.

It localises to the cytoplasm. The protein localises to the nucleoid. The sequence is that of Transcriptional regulator MraZ from Mycolicibacterium smegmatis (strain ATCC 700084 / mc(2)155) (Mycobacterium smegmatis).